Reading from the N-terminus, the 247-residue chain is MALLEICCYSAECAVTAQQYGADRIELCAAPKEGGLTPSYGVLKSVRQTVTIPVHPIIRPRGGDFFYSAGEFDAMLEDIAMVHDLGFPGLVLGLLDEDGNVDMPRMRQVMTAAKGMAVTFHRAFDMCRNPRQAFDKLAELGVARILTSGQESSAEKGIKLITELKAQSGVPIIMAGAGVRASNLEIFINAGVEELHSSAGKWTPSPMRYRNTGLSMSTDAEADEYSRYGVEGESVAVMKSIIERHHV.

The protein belongs to the CutC family.

It localises to the cytoplasm. This Enterobacter sp. (strain 638) protein is PF03932 family protein CutC.